The sequence spans 442 residues: tRNA modification GTPase MnmE (442 aa).

(6S)-5-formyl-5,6,7,8-tetrahydrofolate is bound by residues arginine 21, glutamate 79, and lysine 118. Residues 214–367 (GFKIAIVGKP…LKEELQNYLN (154 aa)) enclose the TrmE-type G domain. Asparagine 224 provides a ligand contact to K(+). GTP contacts are provided by residues 224–229 (NVGKSS), 243–249 (SDIAGTT), and 268–271 (DTAG). Serine 228 contributes to the Mg(2+) binding site. K(+) contacts are provided by serine 243, isoleucine 245, and threonine 248. Residue threonine 249 coordinates Mg(2+). Position 442 (lysine 442) interacts with (6S)-5-formyl-5,6,7,8-tetrahydrofolate.

This sequence belongs to the TRAFAC class TrmE-Era-EngA-EngB-Septin-like GTPase superfamily. TrmE GTPase family. In terms of assembly, homodimer. Heterotetramer of two MnmE and two MnmG subunits. The cofactor is K(+).

It is found in the cytoplasm. Exhibits a very high intrinsic GTPase hydrolysis rate. Involved in the addition of a carboxymethylaminomethyl (cmnm) group at the wobble position (U34) of certain tRNAs, forming tRNA-cmnm(5)s(2)U34. The polypeptide is tRNA modification GTPase MnmE (Campylobacter jejuni subsp. jejuni serotype O:2 (strain ATCC 700819 / NCTC 11168)).